Consider the following 147-residue polypeptide: Large ribosomal subunit protein bL9 (147 aa).

The protein belongs to the bacterial ribosomal protein bL9 family.

Its function is as follows. Binds to the 23S rRNA. The chain is Large ribosomal subunit protein bL9 from Shouchella clausii (strain KSM-K16) (Alkalihalobacillus clausii).